The chain runs to 131 residues: mRNA stability protein IGO2 (131 aa).

The segment covering 1-13 (MSEDLSPTSSRVD) has biased composition (polar residues). Residues 1–26 (MSEDLSPTSSRVDLSNPHGFTKEGVD) are disordered. Ser2 is subject to N-acetylserine. Ser6, Ser63, Ser108, and Ser119 each carry phosphoserine. The disordered stretch occupies residues 81-131 (VNNSSNNLPVTNPSGLRESIIRRRMSSSSGGDSISRQGSISSGPPPRSPNK). Residues 106–122 (SSSSGGDSISRQGSISS) are compositionally biased toward low complexity.

The protein belongs to the endosulfine family. Post-translationally, phosphorylated by RIM15.

The protein localises to the cytoplasm. The protein resides in the nucleus. In terms of biological role, required for TORC1 to properly control gene expression and chronological life span. Plays an essential role in initiation of the G0 program by preventing the degradation of specific nutrient-regulated mRNAs via the 5'-3' mRNA decay pathway. This chain is mRNA stability protein IGO2 (IGO2), found in Saccharomyces cerevisiae (strain ATCC 204508 / S288c) (Baker's yeast).